A 256-amino-acid chain; its full sequence is Hydroxyethylthiazole kinase (256 aa).

Met38 is a binding site for substrate. The ATP site is built by Arg114 and Thr159. Substrate is bound at residue Gly186.

This sequence belongs to the Thz kinase family. The cofactor is Mg(2+).

It carries out the reaction 5-(2-hydroxyethyl)-4-methylthiazole + ATP = 4-methyl-5-(2-phosphooxyethyl)-thiazole + ADP + H(+). The protein operates within cofactor biosynthesis; thiamine diphosphate biosynthesis; 4-methyl-5-(2-phosphoethyl)-thiazole from 5-(2-hydroxyethyl)-4-methylthiazole: step 1/1. In terms of biological role, catalyzes the phosphorylation of the hydroxyl group of 4-methyl-5-beta-hydroxyethylthiazole (THZ). The sequence is that of Hydroxyethylthiazole kinase from Streptococcus agalactiae serotype III (strain NEM316).